We begin with the raw amino-acid sequence, 97 residues long: uncharacterized protein (97 aa).

This is an uncharacterized protein from Mycoplasma capricolum subsp. capricolum (strain California kid / ATCC 27343 / NCTC 10154).